The chain runs to 131 residues: uncharacterized protein (131 aa).

This is an uncharacterized protein from Saccharomyces cerevisiae (strain ATCC 204508 / S288c) (Baker's yeast).